Here is a 232-residue protein sequence, read N- to C-terminus: Putative N-acetylmannosamine-6-phosphate 2-epimerase (232 aa).

The protein belongs to the NanE family.

It carries out the reaction an N-acyl-D-glucosamine 6-phosphate = an N-acyl-D-mannosamine 6-phosphate. Its pathway is amino-sugar metabolism; N-acetylneuraminate degradation; D-fructose 6-phosphate from N-acetylneuraminate: step 3/5. Its function is as follows. Converts N-acetylmannosamine-6-phosphate (ManNAc-6-P) to N-acetylglucosamine-6-phosphate (GlcNAc-6-P). This chain is Putative N-acetylmannosamine-6-phosphate 2-epimerase, found in Borreliella afzelii (strain PKo) (Borrelia afzelii).